The sequence spans 515 residues: ATP synthase subunit alpha (515 aa).

ATP is bound at residue 169-176; that stretch reads GDRQTGKT.

It belongs to the ATPase alpha/beta chains family. As to quaternary structure, F-type ATPases have 2 components, CF(1) - the catalytic core - and CF(0) - the membrane proton channel. CF(1) has five subunits: alpha(3), beta(3), gamma(1), delta(1), epsilon(1). CF(0) has three main subunits: a(1), b(2) and c(9-12). The alpha and beta chains form an alternating ring which encloses part of the gamma chain. CF(1) is attached to CF(0) by a central stalk formed by the gamma and epsilon chains, while a peripheral stalk is formed by the delta and b chains.

Its subcellular location is the cell inner membrane. The enzyme catalyses ATP + H2O + 4 H(+)(in) = ADP + phosphate + 5 H(+)(out). In terms of biological role, produces ATP from ADP in the presence of a proton gradient across the membrane. The alpha chain is a regulatory subunit. In Neisseria meningitidis serogroup A / serotype 4A (strain DSM 15465 / Z2491), this protein is ATP synthase subunit alpha.